Consider the following 443-residue polypeptide: Maintenance of mitochondrial morphology protein 1 (443 aa).

Residues 1-80 are Lumenal-facing; the sequence is MADLETSDLS…PSNTWSFTQG (80 aa). The helical transmembrane segment at 81–101 threads the bilayer; that stretch reads LIVGQLSVVFVIVIFIKFFVF. The Cytoplasmic segment spans residues 102-443; sequence AESSPALAKS…NGDKVEDGSN (342 aa). Disordered stretches follow at residues 126 to 146 and 304 to 358; these read KKDQ…TTAS and LSAH…NDGT. Residues 131 to 142 are compositionally biased toward acidic residues; it reads SSDDADPDDDSE. The 253-residue stretch at 165–417 folds into the SMP-LTD domain; it reads SPESLDWFNV…EPRFQVVRLP (253 aa).

It belongs to the MMM1 family. In terms of assembly, homodimer. Component of the ER-mitochondria encounter structure (ERMES) or MDM complex, composed of MMM1, MDM10, MDM12 and MDM34. An MMM1 homodimer associates with one molecule of MDM12 on each side in a pairwise head-to-tail manner, and the SMP-LTD domains of MMM1 and MDM12 generate a continuous hydrophobic tunnel for phospholipid trafficking.

Its subcellular location is the endoplasmic reticulum membrane. In terms of biological role, component of the ERMES/MDM complex, which serves as a molecular tether to connect the endoplasmic reticulum (ER) and mitochondria. Components of this complex are involved in the control of mitochondrial shape and protein biogenesis, and function in nonvesicular lipid trafficking between the ER and mitochondria. The MDM12-MMM1 subcomplex functions in the major beta-barrel assembly pathway that is responsible for biogenesis of all outer membrane beta-barrel proteins, and acts in a late step after the SAM complex. The MDM10-MDM12-MMM1 subcomplex further acts in the TOM40-specific pathway after the action of the MDM12-MMM1 complex. Essential for establishing and maintaining the structure of mitochondria and maintenance of mtDNA nucleoids. The sequence is that of Maintenance of mitochondrial morphology protein 1 from Scheffersomyces stipitis (strain ATCC 58785 / CBS 6054 / NBRC 10063 / NRRL Y-11545) (Yeast).